Reading from the N-terminus, the 334-residue chain is MNSETPAAGPQQAQPPATLTIASRESRLAMWQAEHVRDALRKLYPACDVKILGMTTRGDQILDRTLSKVGGKGLFVKELEAALADGRADLAVHSLKDVPMALPDGFSLAAIMEREDPRDAFVSNDYASLDALPAGAVVGTSSLRREAMLRSRYPHLEVLPLRGNLDTRLAKLDRGDYAAIILAAAGLKRLGLEARIRALLDVEASPPAAGQGALGIEIAAHRDDVAAWLAPLHDPQTALAVEAERMVSRALGGSCEVPLAAHAVWRAGELYLTGRVSTTDGKRVLTAEECGAVVTVADALALGRAVSDELEAQGALDIVQALLAGSQAAGKGDA.

Residue Cys-255 is modified to S-(dipyrrolylmethanemethyl)cysteine.

It belongs to the HMBS family. As to quaternary structure, monomer. Dipyrromethane serves as cofactor.

It carries out the reaction 4 porphobilinogen + H2O = hydroxymethylbilane + 4 NH4(+). The protein operates within porphyrin-containing compound metabolism; protoporphyrin-IX biosynthesis; coproporphyrinogen-III from 5-aminolevulinate: step 2/4. Its function is as follows. Tetrapolymerization of the monopyrrole PBG into the hydroxymethylbilane pre-uroporphyrinogen in several discrete steps. The sequence is that of Porphobilinogen deaminase from Burkholderia orbicola (strain MC0-3).